Here is a 302-residue protein sequence, read N- to C-terminus: Recombination-associated protein RdgC (302 aa).

This sequence belongs to the RdgC family.

The protein localises to the cytoplasm. It localises to the nucleoid. Its function is as follows. May be involved in recombination. This is Recombination-associated protein RdgC from Actinobacillus pleuropneumoniae serotype 5b (strain L20).